A 261-amino-acid chain; its full sequence is Single-strand annealing weakened protein 1 (261 aa).

Interacts with MSH2, MSH3, RAD1, RAD10, RAD51 and RAD52.

Its subcellular location is the nucleus. In terms of biological role, catalyzes 3'-non-homologous tail removal of RAD1/RAD10-dependent single-strand annealing recombination intermediates. Plays a key role in targeting RAD1/RAD10 complex to 3'-flap cleavage substrate in recombination. Also contributes to the integrity of ribosomal DNA arrays. The chain is Single-strand annealing weakened protein 1 (SAW1) from Saccharomyces cerevisiae (strain ATCC 204508 / S288c) (Baker's yeast).